Reading from the N-terminus, the 537-residue chain is Putative cysteine ligase BshC (537 aa).

Residues 383-451 are a coiled coil; that stretch reads MERTQKLLKQ…EVKENQDNFN (69 aa).

This sequence belongs to the BshC family.

In terms of biological role, involved in bacillithiol (BSH) biosynthesis. May catalyze the last step of the pathway, the addition of cysteine to glucosamine malate (GlcN-Mal) to generate BSH. The chain is Putative cysteine ligase BshC from Staphylococcus haemolyticus (strain JCSC1435).